Reading from the N-terminus, the 324-residue chain is Nucleotide-binding protein GbCGDNIH1_0395 (324 aa).

Residue 14–21 (GLSGAGKS) participates in ATP binding. Residue 59 to 62 (DARS) coordinates GTP. Positions 286–324 (ISDDAPQAGAARVSTDDRNGRPEEHGSAQAPDELSRTTS) are disordered. A compositionally biased stretch (basic and acidic residues) spans 299-311 (STDDRNGRPEEHG).

This sequence belongs to the RapZ-like family.

Displays ATPase and GTPase activities. The chain is Nucleotide-binding protein GbCGDNIH1_0395 from Granulibacter bethesdensis (strain ATCC BAA-1260 / CGDNIH1).